A 118-amino-acid polypeptide reads, in one-letter code: Protein Rev (118 aa).

Ser-5 and Ser-8 each carry phosphoserine; by host CK2. Residues 18 to 28 form a homomultimerization region; that stretch reads LIKFLYQSSSD. The tract at residues 23 to 52 is disordered; the sequence is YQSSSDPPPNPGGTRQARRNRRRRWRERQR. A Nuclear localization signal and RNA-binding (RRE) motif is present at residues 36 to 52; it reads TRQARRNRRRRWRERQR. Residues 38 to 49 are compositionally biased toward basic residues; that stretch reads QARRNRRRRWRE. The Nuclear export signal and binding to XPO1 motif lies at 75 to 86; the sequence is LQLPPLERLTLD. Positions 92–118 are disordered; the sequence is GTSGTQGVGSPQILVESPTVLESGTKE. Phosphoserine; by host is present on residues Ser-94 and Ser-101.

It belongs to the HIV-1 REV protein family. Homomultimer; when bound to the RRE. Multimeric assembly is essential for activity and may involve XPO1. Binds to human KPNB1, XPO1, TNPO1, RANBP5 and IPO7. Interacts with the viral Integrase. Interacts with human KHDRBS1. Interacts with human NAP1; this interaction decreases Rev multimerization and stimulates its activity. Interacts with human DEAD-box helicases DDX3 and DDX24; these interactions may serve for viral RNA export to the cytoplasm and packaging, respectively. Interacts with human PSIP1; this interaction may inhibit HIV-1 DNA integration by promoting dissociation of the Integrase-LEDGF/p75 complex. In terms of processing, asymmetrically arginine dimethylated at one site by host PRMT6. Methylation impairs the RNA-binding activity and export of viral RNA from the nucleus to the cytoplasm. Post-translationally, phosphorylated by protein kinase CK2. Presence of, and maybe binding to the N-terminus of the regulatory beta subunit of CK2 is necessary for CK2-mediated Rev's phosphorylation.

Its subcellular location is the host nucleus. It is found in the host nucleolus. The protein resides in the host cytoplasm. In terms of biological role, escorts unspliced or incompletely spliced viral pre-mRNAs (late transcripts) out of the nucleus of infected cells. These pre-mRNAs carry a recognition sequence called Rev responsive element (RRE) located in the env gene, that is not present in fully spliced viral mRNAs (early transcripts). This function is essential since most viral proteins are translated from unspliced or partially spliced pre-mRNAs which cannot exit the nucleus by the pathway used by fully processed cellular mRNAs. Rev itself is translated from a fully spliced mRNA that readily exits the nucleus. Rev's nuclear localization signal (NLS) binds directly to KPNB1/Importin beta-1 without previous binding to KPNA1/Importin alpha-1. KPNB1 binds to the GDP bound form of RAN (Ran-GDP) and targets Rev to the nucleus. In the nucleus, the conversion from Ran-GDP to Ran-GTP dissociates Rev from KPNB1 and allows Rev's binding to the RRE in viral pre-mRNAs. Rev multimerization on the RRE via cooperative assembly exposes its nuclear export signal (NES) to the surface. Rev can then form a complex with XPO1/CRM1 and Ran-GTP, leading to nuclear export of the complex. Conversion from Ran-GTP to Ran-GDP mediates dissociation of the Rev/RRE/XPO1/RAN complex, so that Rev can return to the nucleus for a subsequent round of export. Beside KPNB1, also seems to interact with TNPO1/Transportin-1, RANBP5/IPO5 and IPO7/RANBP7 for nuclear import. The nucleoporin-like HRB/RIP is an essential cofactor that probably indirectly interacts with Rev to release HIV RNAs from the perinuclear region to the cytoplasm. In Human immunodeficiency virus type 1 group M subtype B (isolate LW123) (HIV-1), this protein is Protein Rev.